Consider the following 500-residue polypeptide: Trehalose-6-phosphate synthase (500 aa).

R28 contributes to the D-glucose 6-phosphate binding site. 48–49 (GG) serves as a coordination point for UDP-alpha-D-glucose. Y104 and D158 together coordinate D-glucose 6-phosphate. UDP-alpha-D-glucose-binding residues include R300 and K305. A D-glucose 6-phosphate-binding site is contributed by R338. UDP-alpha-D-glucose is bound at residue 403 to 407 (LVAKE).

It belongs to the glycosyltransferase 20 family. In terms of assembly, homotetramer.

The enzyme catalyses ADP-alpha-D-glucose + D-glucose 6-phosphate = alpha,alpha-trehalose 6-phosphate + ADP + H(+). It carries out the reaction CDP-alpha-D-glucose + D-glucose 6-phosphate = alpha,alpha-trehalose 6-phosphate + CDP + H(+). It catalyses the reaction GDP-alpha-D-glucose + D-glucose 6-phosphate = alpha,alpha-trehalose 6-phosphate + GDP + H(+). The catalysed reaction is TDP-alpha-D-glucose + D-glucose 6-phosphate = 5-methyl-UDP + alpha,alpha-trehalose 6-phosphate + H(+). The enzyme catalyses D-glucose 6-phosphate + UDP-alpha-D-glucose = alpha,alpha-trehalose 6-phosphate + UDP + H(+). It participates in glycan biosynthesis; trehalose biosynthesis. Probably involved in the osmoprotection via the biosynthesis of trehalose and in the production of glycogen and alpha-glucan via the TreS-Pep2 branch involved in the biosynthesis of maltose-1-phosphate (M1P). Catalyzes the transfer of glucose from UDP-glucose (UDP-Glc) to D-glucose 6-phosphate (Glc-6-P) to form trehalose-6-phosphate. Probably also able to use ADP-Glc, CDP-Glc, GDP-Glc and TDP-Glc as glucosyl donors. This is Trehalose-6-phosphate synthase from Mycobacterium marinum (strain ATCC BAA-535 / M).